Here is a 111-residue protein sequence, read N- to C-terminus: Rubredoxin (111 aa).

A Rubredoxin-like domain is found at 11–62; the sequence is LDRFECRSCGYVYEPEKGDSKHDIAPETPFAELPINWRCPVCTAKKAAFSNI. Positions 16, 19, 49, and 52 each coordinate Fe cation.

The protein belongs to the rubredoxin family. Fe(3+) is required as a cofactor.

Its function is as follows. Rubredoxin is a small nonheme, iron protein lacking acid-labile sulfide. Its single Fe, chelated to 4 Cys, functions as an electron acceptor and may also stabilize the conformation of the molecule. Could be involved in hydrogenase-linked redox processes. In Trichormus variabilis (strain ATCC 29413 / PCC 7937) (Anabaena variabilis), this protein is Rubredoxin (rub).